The following is a 64-amino-acid chain: PYLa/PGLa A (64 aa).

The N-terminal stretch at 1-20 is a signal peptide; the sequence is MYKQIFLCLIIAALCATIMA. A propeptide spanning residues 21–35 is cleaved from the precursor; it reads EASAFADADEDDDKR. Leucine amide is present on Leu59. Positions 60 to 64 are excised as a propeptide; the sequence is GRRDS.

Belongs to the gastrin/cholecystokinin family. Magainin subfamily. In terms of tissue distribution, expressed by the skin glands. Synthesized in the stomach and stored in a novel granular multinucleated cell in the gastric mucosa. Stored as active, processed peptides in large granules within the granular gland secretions of the skin.

The protein resides in the secreted. Functionally, PGLa and PGLa-H display a broad-spectrum of antibacterial activity against a range of Gram-positive and Gram-negative bacteria. PGLa also displays antifungal activity against C.albicans ATCC 14053. PGLa-H shows moderate antibacterial activity against the multidrug-resistant methicillin-resistant S.aureus (MRSA) but exhibits very little hemolytic activity. This is PYLa/PGLa A (pgla-a) from Xenopus laevis (African clawed frog).